We begin with the raw amino-acid sequence, 131 residues long: Translation initiation factor 5A (131 aa).

Lysine 36 carries the post-translational modification Hypusine.

It belongs to the eIF-5A family.

The protein localises to the cytoplasm. In terms of biological role, functions by promoting the formation of the first peptide bond. This is Translation initiation factor 5A from Saccharolobus solfataricus (strain ATCC 35092 / DSM 1617 / JCM 11322 / P2) (Sulfolobus solfataricus).